We begin with the raw amino-acid sequence, 277 residues long: Large ribosomal subunit protein uL2c (277 aa).

Positions 224–257 are disordered; the sequence is VMNPIDHPHGGGEGRAPIGRKKPLTPWGHPALGR.

Belongs to the universal ribosomal protein uL2 family. In terms of assembly, part of the 50S ribosomal subunit.

It is found in the plastid. Its subcellular location is the chloroplast. In Anthoceros angustus (Hornwort), this protein is Large ribosomal subunit protein uL2c (rpl2).